A 138-amino-acid chain; its full sequence is Nucleoside diphosphate kinase (138 aa).

ATP contacts are provided by K10, F58, R86, T92, R103, and N113. H116 acts as the Pros-phosphohistidine intermediate in catalysis.

It belongs to the NDK family. Homotetramer. Requires Mg(2+) as cofactor.

It is found in the cytoplasm. It catalyses the reaction a 2'-deoxyribonucleoside 5'-diphosphate + ATP = a 2'-deoxyribonucleoside 5'-triphosphate + ADP. It carries out the reaction a ribonucleoside 5'-diphosphate + ATP = a ribonucleoside 5'-triphosphate + ADP. Functionally, major role in the synthesis of nucleoside triphosphates other than ATP. The ATP gamma phosphate is transferred to the NDP beta phosphate via a ping-pong mechanism, using a phosphorylated active-site intermediate. The polypeptide is Nucleoside diphosphate kinase (Glaesserella parasuis serovar 5 (strain SH0165) (Haemophilus parasuis)).